The sequence spans 166 residues: Urocortin-3 (166 aa).

Positions 1–23 (MLVPAPFLLVLLLLLGAPQVGLS) are cleaved as a signal peptide. The propeptide occupies 24 to 123 (QRSPKAGSSP…QDKAKSDRRT (100 aa)). Over residues 41-51 (REAEKSQRKDT) the composition is skewed to basic and acidic residues. Residues 41–123 (REAEKSQRKD…QDKAKSDRRT (83 aa)) are disordered. A compositionally biased stretch (acidic residues) spans 68-77 (EDQEGQEEED). A compositionally biased stretch (gly residues) spans 86 to 96 (SVGGGGGGGAG). A compositionally biased stretch (basic and acidic residues) spans 113–123 (SQDKAKSDRRT). The residue at position 162 (Ile-162) is an Isoleucine amide.

This sequence belongs to the sauvagine/corticotropin-releasing factor/urotensin I family. In terms of assembly, binds with high affinity to CRF receptors 2-alpha and 2-beta.

It is found in the secreted. Functionally, suppresses food intake, delays gastric emptying and decreases heat-induced edema. Might represent an endogenous ligand for maintaining homeostasis after stress. The sequence is that of Urocortin-3 (UCN3) from Bos taurus (Bovine).